Consider the following 447-residue polypeptide: N-succinylarginine dihydrolase (447 aa).

Substrate-binding positions include 19–28 (AGLSFGNEAS), asparagine 110, and 137–138 (HR). Glutamate 174 is an active-site residue. Arginine 212 provides a ligand contact to substrate. Histidine 248 is an active-site residue. Residues aspartate 250 and asparagine 359 each contribute to the substrate site. Residue cysteine 365 is the Nucleophile of the active site.

The protein belongs to the succinylarginine dihydrolase family. As to quaternary structure, homodimer.

It carries out the reaction N(2)-succinyl-L-arginine + 2 H2O + 2 H(+) = N(2)-succinyl-L-ornithine + 2 NH4(+) + CO2. The protein operates within amino-acid degradation; L-arginine degradation via AST pathway; L-glutamate and succinate from L-arginine: step 2/5. Catalyzes the hydrolysis of N(2)-succinylarginine into N(2)-succinylornithine, ammonia and CO(2). The protein is N-succinylarginine dihydrolase of Salmonella typhi.